The sequence spans 401 residues: Argininosuccinate synthase (401 aa).

ATP-binding positions include 8-16 (AYSGGLDTS) and Ala-35. L-citrulline contacts are provided by Tyr-86 and Ser-91. Gly-116 is an ATP binding site. Thr-118, Asn-122, and Asp-123 together coordinate L-aspartate. Position 122 (Asn-122) interacts with L-citrulline. Arg-126, Ser-175, Ser-184, Glu-260, and Tyr-272 together coordinate L-citrulline.

The protein belongs to the argininosuccinate synthase family. Type 1 subfamily. Homotetramer.

It localises to the cytoplasm. It catalyses the reaction L-citrulline + L-aspartate + ATP = 2-(N(omega)-L-arginino)succinate + AMP + diphosphate + H(+). Its pathway is amino-acid biosynthesis; L-arginine biosynthesis; L-arginine from L-ornithine and carbamoyl phosphate: step 2/3. The sequence is that of Argininosuccinate synthase from Carboxydothermus hydrogenoformans (strain ATCC BAA-161 / DSM 6008 / Z-2901).